The following is a 308-amino-acid chain: Solute carrier family 25 member 47 (308 aa).

Solcar repeat units lie at residues 1–80, 93–206, and 215–302; these read MDFV…CLAH, PTKA…LCEW, and PDVP…VLRL. Helical transmembrane passes span 3–23, 49–69, 98–116, 190–210, 217–237, and 273–293; these read FVAG…LDTV, VWGF…VSSV, ITLS…TSPT, GHSF…LSPA, VPGV…VATP, and VLFK…MVVF.

Belongs to the mitochondrial carrier (TC 2.A.29) family. As to expression, specifically expressed in liver.

It is found in the mitochondrion inner membrane. Its subcellular location is the mitochondrion outer membrane. It carries out the reaction NAD(+)(in) = NAD(+)(out). The catalysed reaction is acetyl-CoA(in) = acetyl-CoA(out). In terms of biological role, mitochondrial NAD(+) transporter that acts as a 'metabolic gate' in hepatic lipogenesis. Provides NAD(+) substrate to mitochondrial SIRT3 deacetylase and enables its NAD(+)-dependent activities in mitochondrial energy metabolism. This triggers downstream activation of PRKAA1/AMPK-alpha signaling cascade that negatively regulates sterol regulatory element-binding protein (SREBP) transcriptional activities and ATP-consuming lipogenesis to restore cellular energy balance. May transport other mitochondrial metabolites having an aromatic nucleotide and phosphate groups, such as acetyl-CoA. Does not transport amino acids. The transport mechanism remains to be elucidated. The sequence is that of Solute carrier family 25 member 47 from Homo sapiens (Human).